We begin with the raw amino-acid sequence, 73 residues long: Large ribosomal subunit protein bL31 (73 aa).

The protein belongs to the bacterial ribosomal protein bL31 family. Type A subfamily. As to quaternary structure, part of the 50S ribosomal subunit.

Functionally, binds the 23S rRNA. The protein is Large ribosomal subunit protein bL31 of Mesorhizobium japonicum (strain LMG 29417 / CECT 9101 / MAFF 303099) (Mesorhizobium loti (strain MAFF 303099)).